A 685-amino-acid chain; its full sequence is Methionine--tRNA ligase (685 aa).

The 'HIGH' region motif lies at 12–22; that stretch reads PYANGSIHLGH. The Zn(2+) site is built by C143, C146, C156, and C159. The 'KMSKS' region signature appears at 339 to 343; that stretch reads KMSKS. K342 lines the ATP pocket. The tRNA-binding domain maps to 582–685; the sequence is DFMKIDMRVA…AGAQPGDKVG (104 aa).

Belongs to the class-I aminoacyl-tRNA synthetase family. MetG type 1 subfamily. In terms of assembly, homodimer. The cofactor is Zn(2+).

The protein resides in the cytoplasm. The enzyme catalyses tRNA(Met) + L-methionine + ATP = L-methionyl-tRNA(Met) + AMP + diphosphate. Functionally, is required not only for elongation of protein synthesis but also for the initiation of all mRNA translation through initiator tRNA(fMet) aminoacylation. The protein is Methionine--tRNA ligase of Neisseria meningitidis serogroup C (strain 053442).